A 207-amino-acid polypeptide reads, in one-letter code: Probable mediator of RNA polymerase II transcription subunit 19b (207 aa).

A disordered region spans residues 99-207; the sequence is DTAPVELPPA…SSKLDEMGAM (109 aa). The segment covering 127–152 has biased composition (basic residues); sequence DRKHRKHKDKKEKDREHKKHKHKHKD. The span at 153–167 shows a compositional bias: basic and acidic residues; sequence RIKDKDKDKDRDKKK. Positions 168 to 179 are enriched in basic residues; that stretch reads EKSGHHDKKRKN.

This sequence belongs to the plant Mediator complex subunit 19 family. As to quaternary structure, component of the Mediator complex.

Its subcellular location is the nucleus. In terms of biological role, component of the Mediator complex, a coactivator involved in the regulated transcription of nearly all RNA polymerase II-dependent genes. Mediator functions as a bridge to convey information from gene-specific regulatory proteins to the basal RNA polymerase II transcription machinery. The Mediator complex, having a compact conformation in its free form, is recruited to promoters by direct interactions with regulatory proteins and serves for the assembly of a functional preinitiation complex with RNA polymerase II and the general transcription factors. This chain is Probable mediator of RNA polymerase II transcription subunit 19b (MED19B), found in Arabidopsis thaliana (Mouse-ear cress).